We begin with the raw amino-acid sequence, 378 residues long: Chaperone protein DnaJ (378 aa).

A J domain is found at aspartate 5–glycine 70. A CR-type zinc finger spans residues glycine 133 to serine 211. Cysteine 146, cysteine 149, cysteine 163, cysteine 166, cysteine 185, cysteine 188, cysteine 199, and cysteine 202 together coordinate Zn(2+). CXXCXGXG motif repeat units follow at residues cysteine 146–glycine 153, cysteine 163–glycine 170, cysteine 185–glycine 192, and cysteine 199–glycine 206.

It belongs to the DnaJ family. In terms of assembly, homodimer. Requires Zn(2+) as cofactor.

The protein resides in the cytoplasm. Its function is as follows. Participates actively in the response to hyperosmotic and heat shock by preventing the aggregation of stress-denatured proteins and by disaggregating proteins, also in an autonomous, DnaK-independent fashion. Unfolded proteins bind initially to DnaJ; upon interaction with the DnaJ-bound protein, DnaK hydrolyzes its bound ATP, resulting in the formation of a stable complex. GrpE releases ADP from DnaK; ATP binding to DnaK triggers the release of the substrate protein, thus completing the reaction cycle. Several rounds of ATP-dependent interactions between DnaJ, DnaK and GrpE are required for fully efficient folding. Also involved, together with DnaK and GrpE, in the DNA replication of plasmids through activation of initiation proteins. This chain is Chaperone protein DnaJ, found in Shewanella woodyi (strain ATCC 51908 / MS32).